The chain runs to 69 residues: MSLELFNQLEQKVQNAVETIEMLKMEAEELREENTRLKQERDEWERRLNGLLGKFQEIEDGNGETSQTP.

Residues 3–60 (LELFNQLEQKVQNAVETIEMLKMEAEELREENTRLKQERDEWERRLNGLLGKFQEIED) adopt a coiled-coil conformation.

It belongs to the ZapB family. In terms of assembly, homodimer. The ends of the coiled-coil dimer bind to each other, forming polymers. Interacts with FtsZ.

The protein localises to the cytoplasm. Its function is as follows. Non-essential, abundant cell division factor that is required for proper Z-ring formation. It is recruited early to the divisome by direct interaction with FtsZ, stimulating Z-ring assembly and thereby promoting cell division earlier in the cell cycle. Its recruitment to the Z-ring requires functional FtsA or ZipA. This is Cell division protein ZapB from Chromohalobacter salexigens (strain ATCC BAA-138 / DSM 3043 / CIP 106854 / NCIMB 13768 / 1H11).